Consider the following 257-residue polypeptide: uncharacterized protein (257 aa).

At serine 127 the chain carries Phosphoserine. Disordered stretches follow at residues 146-174 (HEDPKPSSTYNSSISAPPEDFKQDGEDDG) and 210-231 (AREKATELKQRRQEQATNRREK). A compositionally biased stretch (polar residues) spans 151–160 (PSSTYNSSIS). Positions 196 to 257 (HVRMVREVHE…QQQQEDEQKT (62 aa)) form a coiled coil.

This is an uncharacterized protein from Arabidopsis thaliana (Mouse-ear cress).